The chain runs to 400 residues: Cell division protein FtsZ 2 (400 aa).

Over residues 1 to 16 (MQDIVREAMERDEAER) the composition is skewed to basic and acidic residues. The interval 1 to 30 (MQDIVREAMERDEAERQTQSSLEDSDDQFG) is disordered. GTP-binding positions include 41–45 (GAGNN), 128–130 (GTG), E159, R162, and D205. Residues 338-400 (VLGPSTQKQA…EKNNGLDVIR (63 aa)) form a disordered region. Residues 352–364 (QSIQSRESQQQHS) are compositionally biased toward low complexity. The segment covering 365–382 (GSEFDSSERAQTAQSGTW) has biased composition (polar residues). Residues 385 to 400 (GGRDEVEKNNGLDVIR) are compositionally biased toward basic and acidic residues.

Belongs to the FtsZ family. As to quaternary structure, homodimer. Polymerizes to form a dynamic ring structure in a strictly GTP-dependent manner. Interacts directly with several other division proteins. Interacts with SepF.

It localises to the cytoplasm. Essential cell division protein that forms a contractile ring structure (Z ring) at the future cell division site. The regulation of the ring assembly controls the timing and the location of cell division. One of the functions of the FtsZ ring is to recruit other cell division proteins to the septum to produce a new cell wall between the dividing cells. Binds GTP and shows GTPase activity. Required for division ring constriction. This chain is Cell division protein FtsZ 2, found in Haloferax volcanii (strain ATCC 29605 / DSM 3757 / JCM 8879 / NBRC 14742 / NCIMB 2012 / VKM B-1768 / DS2) (Halobacterium volcanii).